Reading from the N-terminus, the 188-residue chain is Ribosome-recycling factor (188 aa).

The protein belongs to the RRF family.

The protein localises to the cytoplasm. Responsible for the release of ribosomes from messenger RNA at the termination of protein biosynthesis. May increase the efficiency of translation by recycling ribosomes from one round of translation to another. The sequence is that of Ribosome-recycling factor from Gluconacetobacter diazotrophicus (strain ATCC 49037 / DSM 5601 / CCUG 37298 / CIP 103539 / LMG 7603 / PAl5).